Reading from the N-terminus, the 97-residue chain is UPF0235 protein cbdbA1230 (97 aa).

Belongs to the UPF0235 family.

The sequence is that of UPF0235 protein cbdbA1230 from Dehalococcoides mccartyi (strain CBDB1).